A 923-amino-acid polypeptide reads, in one-letter code: Phosphoenolpyruvate carboxylase (923 aa).

Residues H149 and K585 contribute to the active site.

Belongs to the PEPCase type 1 family. Requires Mg(2+) as cofactor.

It carries out the reaction oxaloacetate + phosphate = phosphoenolpyruvate + hydrogencarbonate. Its function is as follows. Forms oxaloacetate, a four-carbon dicarboxylic acid source for the tricarboxylic acid cycle. The chain is Phosphoenolpyruvate carboxylase from Nocardia farcinica (strain IFM 10152).